The sequence spans 603 residues: MNITTALPLPTHLLSEKVTAPLLGARKIYVTGSRQDIRVPMREIALTPSSARYGGNENLSLVLYDTSGIYTDPQATIDLACGLPRLRTAWIDERADTVEAKLHFKVPESVSVTAPPFPTPPQPLRARDNVAVTQLEYARRGLVTPEMEFVAIREQQRREQTVENLRGQRHAGDAWGALVGTPITPEFVRDEIARGRAILPNNINHPESEPMIIGRNFLTKINANIGTSALSSSIAEEVEKLVWAIRWGADTIMDLSTGRDIHATREWILRNSPVPVGTVPIYQALEKVDGHVDALSWDVFRDTLIEQAEQGVDYVTVHAGVLRDFIPLTASRLTGIVSRGGSIMARWCQAHRSENFLYTHFEELCEIMRAYDVAFSLGDGLRPGCIADANDAAQFAELEILGKLTHIAWNHQVQVMVEGPGHVPMQLIKANMDKQLAACGEAPFYTLGPLTTDIAPGYDHITSAIGAAMIGWYGTAMLCYVTPKEHLGLPNLQDVHDGIIAYKIAAHAADLAKGHPAAQARDDALSKARFEFRWQDQFHLSLDPEKALALHDESLPKEAHKRAAFCSMCGPQFCSMKISQEVRDASSSELSDANTDINTSDGI.

Substrate contacts are provided by residues asparagine 224, methionine 253, tyrosine 282, histidine 318, 338 to 340 (SRG), 379 to 382 (DGLR), and glutamate 418. Residue histidine 422 participates in Zn(2+) binding. Tyrosine 445 provides a ligand contact to substrate. Residue histidine 486 coordinates Zn(2+). Cysteine 566, cysteine 569, and cysteine 574 together coordinate [4Fe-4S] cluster.

This sequence belongs to the ThiC family. As to quaternary structure, homodimer. [4Fe-4S] cluster is required as a cofactor.

It catalyses the reaction 5-amino-1-(5-phospho-beta-D-ribosyl)imidazole + S-adenosyl-L-methionine = 4-amino-2-methyl-5-(phosphooxymethyl)pyrimidine + CO + 5'-deoxyadenosine + formate + L-methionine + 3 H(+). The protein operates within cofactor biosynthesis; thiamine diphosphate biosynthesis. In terms of biological role, catalyzes the synthesis of the hydroxymethylpyrimidine phosphate (HMP-P) moiety of thiamine from aminoimidazole ribotide (AIR) in a radical S-adenosyl-L-methionine (SAM)-dependent reaction. This Xylella fastidiosa (strain Temecula1 / ATCC 700964) protein is Phosphomethylpyrimidine synthase.